The following is a 981-amino-acid chain: Probable NAD kinase 2, chloroplastic (981 aa).

Residues 319-364 (APSAEQVQRFAEIVSDSAKKPIYLHSQEGISRTSAMVSRWKQYVTR) form a calmodulin-binding region. Disordered regions lie at residues 369-413 (ATQN…DRTM) and 551-601 (TNGK…AERN). Composition is skewed to polar residues over residues 387-406 (TEQLTNSPGFSSEGSENGTP), 551-563 (TNGKPSNNGASTS), and 581-596 (SDTSNSNGNAPLGSQK).

Belongs to the NAD kinase family.

It localises to the plastid. The protein localises to the chloroplast. The enzyme catalyses NAD(+) + ATP = ADP + NADP(+) + H(+). Involved in chlorophyll synthesis and chloroplast protection against oxidative damage. The polypeptide is Probable NAD kinase 2, chloroplastic (Oryza sativa subsp. japonica (Rice)).